A 381-amino-acid chain; its full sequence is Neutral protease 2 homolog mep20 (381 aa).

The first 19 residues, 1-19, serve as a signal peptide directing secretion; sequence MRFTALASAILPLACNVLA. Positions 20–193 are excised as a propeptide; it reads LPAKTGEAPK…ASAVKPLDKR (174 aa). 2 disulfide bridges follow: C199–C271 and C278–C296. Zn(2+) is bound at residue H321. The active site involves E322. Positions 325 and 336 each coordinate Zn(2+).

Belongs to the peptidase M35 family. It depends on Zn(2+) as a cofactor.

The enzyme catalyses Preferential cleavage of bonds with hydrophobic residues in P1'. Also 3-Asn-|-Gln-4 and 8-Gly-|-Ser-9 bonds in insulin B chain.. In terms of biological role, secreted metalloproteinase that allows assimilation of proteinaceous substrates. Shows high activities on basic nuclear substrates such as histone and protamine. The chain is Neutral protease 2 homolog mep20 (mep20) from Aspergillus flavus.